A 298-amino-acid polypeptide reads, in one-letter code: MSRPEQQLKKMLKTPQAQYAFYPTAKVERISTTQHMYFIATRPMFEGGRNNVFLGHQVGQPIIFKYVSKKEIPGNEVIVLKALQDTPGVIKLIEYTENAMYHILIIEYIPNSVDLLHYHYFKKLEETEAKKIIFQLILIIQNIYEKGFIHGDIKDENLIIDINQKIIKVIDFGSAVRLDETRPQYNMFGTWEYVCPEFYYYGYYYQLPLTVWTIGMVAVNLFRFRAENFYLNDILKRENYIPENISETGKQFITECLTINENKRLSFKSLVSHPWFKGLKKEIQPISELGVDYKNVIT.

Positions 38–276 (FIATRPMFEG…FKSLVSHPWF (239 aa)) constitute a Protein kinase domain. ATP-binding positions include 45–53 (FEGGRNNVF) and Lys65. Asp152 serves as the catalytic Proton acceptor.

This sequence belongs to the protein kinase superfamily. Ser/Thr protein kinase family.

The protein localises to the virion. It is found in the host cytoplasm. The catalysed reaction is L-seryl-[protein] + ATP = O-phospho-L-seryl-[protein] + ADP + H(+). The enzyme catalyses L-threonyl-[protein] + ATP = O-phospho-L-threonyl-[protein] + ADP + H(+). Functionally, essential for viral replication. It may mediate the virus progression through DNA replication. This chain is Serine/threonine-protein kinase 1, found in African swine fever virus (strain Badajoz 1971 Vero-adapted) (Ba71V).